We begin with the raw amino-acid sequence, 208 residues long: Small ribosomal subunit protein uS4 (208 aa).

The S4 RNA-binding domain maps to 98–160 (CRLDNVVYRM…AKKQSRIQLA (63 aa)).

This sequence belongs to the universal ribosomal protein uS4 family. As to quaternary structure, part of the 30S ribosomal subunit. Contacts protein S5. The interaction surface between S4 and S5 is involved in control of translational fidelity.

Its function is as follows. One of the primary rRNA binding proteins, it binds directly to 16S rRNA where it nucleates assembly of the body of the 30S subunit. Functionally, with S5 and S12 plays an important role in translational accuracy. This Ruthia magnifica subsp. Calyptogena magnifica protein is Small ribosomal subunit protein uS4.